A 403-amino-acid polypeptide reads, in one-letter code: Arginine deiminase (403 aa).

The Amidino-cysteine intermediate role is filled by Cys-388.

The protein belongs to the arginine deiminase family.

The protein localises to the cytoplasm. The catalysed reaction is L-arginine + H2O = L-citrulline + NH4(+). It participates in amino-acid degradation; L-arginine degradation via ADI pathway; carbamoyl phosphate from L-arginine: step 1/2. The polypeptide is Arginine deiminase (Mycoplasma capricolum subsp. capricolum (strain California kid / ATCC 27343 / NCTC 10154)).